The following is a 276-amino-acid chain: 2-dehydro-3-deoxyphosphooctonate aldolase (276 aa).

The protein belongs to the KdsA family.

The protein resides in the cytoplasm. It carries out the reaction D-arabinose 5-phosphate + phosphoenolpyruvate + H2O = 3-deoxy-alpha-D-manno-2-octulosonate-8-phosphate + phosphate. It participates in carbohydrate biosynthesis; 3-deoxy-D-manno-octulosonate biosynthesis; 3-deoxy-D-manno-octulosonate from D-ribulose 5-phosphate: step 2/3. It functions in the pathway bacterial outer membrane biogenesis; lipopolysaccharide biosynthesis. This is 2-dehydro-3-deoxyphosphooctonate aldolase from Helicobacter pylori (strain P12).